Consider the following 90-residue polypeptide: N(2)-fixation sustaining protein CowN (90 aa).

This sequence belongs to the CowN family.

In terms of biological role, is required to sustain N(2)-dependent growth in the presence of low levels of carbon monoxide (CO). Probably acts by protecting the N(2) fixation ability of the nitrogenase complex, which is inactivated in the presence of CO. The polypeptide is N(2)-fixation sustaining protein CowN (Methylocella silvestris (strain DSM 15510 / CIP 108128 / LMG 27833 / NCIMB 13906 / BL2)).